The primary structure comprises 362 residues: Heat-inducible transcription repressor HrcA (362 aa).

This sequence belongs to the HrcA family.

Its function is as follows. Negative regulator of class I heat shock genes (grpE-dnaK-dnaJ and groELS operons). Prevents heat-shock induction of these operons. The sequence is that of Heat-inducible transcription repressor HrcA from Rhizobium johnstonii (strain DSM 114642 / LMG 32736 / 3841) (Rhizobium leguminosarum bv. viciae).